A 128-amino-acid chain; its full sequence is Cystatin-12 (128 aa).

An N-terminal signal peptide occupies residues 1–21 (MLWKSVLSVALIVLGIHDCSF). 2 disulfides stabilise this stretch: cysteine 82–cysteine 92 and cysteine 105–cysteine 125. N-linked (GlcNAc...) asparagine glycosylation is present at asparagine 122.

It belongs to the cystatin family. In terms of tissue distribution, located at the very proximal caput epididymis (at protein level). Expressed in epididymis, Sertoli cells and testis. Also found to be weakly expressed in ovary and prostate.

It localises to the secreted. Its function is as follows. May play a specialized role in spermatogenesis. The sequence is that of Cystatin-12 (Cst12) from Mus musculus (Mouse).